The sequence spans 485 residues: Phenylalanine--tRNA ligase alpha subunit, cytoplasmic (485 aa).

Residues T318, 360–362, and Y400 contribute to the L-phenylalanine site; that span reads QIE. E402 is a binding site for Mg(2+). L-phenylalanine is bound at residue F426.

It belongs to the class-II aminoacyl-tRNA synthetase family. Phe-tRNA synthetase alpha subunit type 2 subfamily. In terms of assembly, tetramer of two alpha and two beta subunits. Requires Mg(2+) as cofactor.

It localises to the cytoplasm. It is found in the cytosol. The enzyme catalyses tRNA(Phe) + L-phenylalanine + ATP = L-phenylalanyl-tRNA(Phe) + AMP + diphosphate + H(+). This chain is Phenylalanine--tRNA ligase alpha subunit, cytoplasmic, found in Arabidopsis thaliana (Mouse-ear cress).